A 225-amino-acid chain; its full sequence is Ribonuclease 3 (225 aa).

The region spanning 4–133 (FEKLEKLLGY…LIAAIYLDSN (130 aa)) is the RNase III domain. Glutamate 46 contacts Mg(2+). Residue aspartate 50 is part of the active site. Residues asparagine 119 and glutamate 122 each contribute to the Mg(2+) site. Residue glutamate 122 is part of the active site. The 68-residue stretch at 158-225 (DPKTALQEWA…AARKLLHKLK (68 aa)) folds into the DRBM domain.

It belongs to the ribonuclease III family. In terms of assembly, homodimer. Mg(2+) is required as a cofactor.

The protein resides in the cytoplasm. It catalyses the reaction Endonucleolytic cleavage to 5'-phosphomonoester.. Functionally, digests double-stranded RNA. Involved in the processing of primary rRNA transcript to yield the immediate precursors to the large and small rRNAs (23S and 16S). Processes some mRNAs, and tRNAs when they are encoded in the rRNA operon. Processes pre-crRNA and tracrRNA of type II CRISPR loci if present in the organism. In Rickettsia felis (strain ATCC VR-1525 / URRWXCal2) (Rickettsia azadi), this protein is Ribonuclease 3.